Reading from the N-terminus, the 266-residue chain is Putative pyruvate, phosphate dikinase regulatory protein (266 aa).

ADP is bound at residue 149-156 (GVSRTSKT).

It belongs to the pyruvate, phosphate/water dikinase regulatory protein family. PDRP subfamily.

The catalysed reaction is N(tele)-phospho-L-histidyl/L-threonyl-[pyruvate, phosphate dikinase] + ADP = N(tele)-phospho-L-histidyl/O-phospho-L-threonyl-[pyruvate, phosphate dikinase] + AMP + H(+). It carries out the reaction N(tele)-phospho-L-histidyl/O-phospho-L-threonyl-[pyruvate, phosphate dikinase] + phosphate + H(+) = N(tele)-phospho-L-histidyl/L-threonyl-[pyruvate, phosphate dikinase] + diphosphate. In terms of biological role, bifunctional serine/threonine kinase and phosphorylase involved in the regulation of the pyruvate, phosphate dikinase (PPDK) by catalyzing its phosphorylation/dephosphorylation. The protein is Putative pyruvate, phosphate dikinase regulatory protein of Halothermothrix orenii (strain H 168 / OCM 544 / DSM 9562).